The sequence spans 317 residues: Carbonic anhydrase 5B, mitochondrial (317 aa).

The transit peptide at 1–33 (MVVMNSLRVILQASPGKLLWRKFQIPRFMPARP) directs the protein to the mitochondrion. An Alpha-carbonic anhydrase domain is found at 37-296 (YTCTYKTRNR…LMNRTVRSSF (260 aa)). 3 residues coordinate Zn(2+): His-130, His-132, and His-155. Position 235-236 (235-236 (TT)) interacts with substrate.

The protein belongs to the alpha-carbonic anhydrase family. The cofactor is Zn(2+). In terms of tissue distribution, strongest expression in heart, pancreas, kidney, placenta, lung, and skeletal muscle. Not expressed in liver.

It is found in the mitochondrion. The catalysed reaction is hydrogencarbonate + H(+) = CO2 + H2O. Its activity is regulated as follows. Inhibited by coumarins, sulfonamide derivatives such as acetazolamide (AZA), saccharin and Foscarnet (phosphonoformate trisodium salt). In terms of biological role, mitochondrial carbonic anhydrase that catalyzes the reversible conversion of carbon dioxide to bicarbonate/HCO3. The polypeptide is Carbonic anhydrase 5B, mitochondrial (CA5B) (Homo sapiens (Human)).